Consider the following 547-residue polypeptide: ATP synthase subunit alpha (547 aa).

Residue 172–179 (GDRKTGKT) coordinates ATP.

Belongs to the ATPase alpha/beta chains family. F-type ATPases have 2 components, CF(1) - the catalytic core - and CF(0) - the membrane proton channel. CF(1) has five subunits: alpha(3), beta(3), gamma(1), delta(1), epsilon(1). CF(0) has three main subunits: a(1), b(2) and c(9-12). The alpha and beta chains form an alternating ring which encloses part of the gamma chain. CF(1) is attached to CF(0) by a central stalk formed by the gamma and epsilon chains, while a peripheral stalk is formed by the delta and b chains.

It localises to the cell membrane. The catalysed reaction is ATP + H2O + 4 H(+)(in) = ADP + phosphate + 5 H(+)(out). In terms of biological role, produces ATP from ADP in the presence of a proton gradient across the membrane. The alpha chain is a regulatory subunit. In Rhodococcus erythropolis (strain PR4 / NBRC 100887), this protein is ATP synthase subunit alpha.